The sequence spans 374 residues: uncharacterized protein (374 aa).

Residues 298 to 332 (TKEKLLKLHSEQKSLSEKINKLSGEKDIEQSMINN) adopt a coiled-coil conformation.

This is an uncharacterized protein from Acanthamoeba polyphaga (Amoeba).